A 35-amino-acid chain; its full sequence is Phospholipase A2 bitanarin (35 aa).

Belongs to the phospholipase A2 family. Group II subfamily. Monomer. The cofactor is Ca(2+). Post-translationally, contains 14 disulfide bonds. In terms of tissue distribution, expressed by the venom gland.

It localises to the secreted. It carries out the reaction a 1,2-diacyl-sn-glycero-3-phosphocholine + H2O = a 1-acyl-sn-glycero-3-phosphocholine + a fatty acid + H(+). Its function is as follows. Snake venom phospholipase A2 (PLA2) that is the first competitive blocker of nicotinic acetylcholine receptors (nAChRs). Competes with alpha-bungarotoxin for binding to nAChRs and acetylcholine binding proteins (AChBPs) and blocks acetylcholine-elicited current. PLA2 catalyzes the calcium-dependent hydrolysis of the 2-acyl groups in 3-sn-phosphoglycerides. The chain is Phospholipase A2 bitanarin from Bitis arietans (African puff adder).